The primary structure comprises 364 residues: Protein RecA (364 aa).

Residue 77-84 participates in ATP binding; that stretch reads GPESSGKT. A disordered region spans residues 343 to 364; the sequence is DRFLQNGGPDPDDGDGDATAEM. The segment covering 352-364 has biased composition (acidic residues); the sequence is DPDDGDGDATAEM.

This sequence belongs to the RecA family.

It is found in the cytoplasm. Functionally, can catalyze the hydrolysis of ATP in the presence of single-stranded DNA, the ATP-dependent uptake of single-stranded DNA by duplex DNA, and the ATP-dependent hybridization of homologous single-stranded DNAs. It interacts with LexA causing its activation and leading to its autocatalytic cleavage. The sequence is that of Protein RecA from Rhizobium johnstonii (strain DSM 114642 / LMG 32736 / 3841) (Rhizobium leguminosarum bv. viciae).